The primary structure comprises 526 residues: uncharacterized protein (526 aa).

WD repeat units follow at residues 210-248 (SMEQYINSIAISPNKKYIALATTCGLIIYNLIDKTHHDT) and 452-491 (SHNSCVTSIAISSNNKMILTAGLDGLLKLWNSKTLNLIDS).

This is an uncharacterized protein from Acanthamoeba polyphaga mimivirus (APMV).